Consider the following 144-residue polypeptide: MKSYLAKPQEIERKWYVIDVAGKPLGRAASQIASILRGKNKPIYTPNVDTGDYVIVLNAEKVLLTGKKADQKMFRHHTLYPGGLKEMSYKDAIAKKADFVFYEAVRRMLPSGVLGRKMIKKLKVYKGEEHNNEAQKPEVLELKY.

The protein belongs to the universal ribosomal protein uL13 family. In terms of assembly, part of the 50S ribosomal subunit.

Its function is as follows. This protein is one of the early assembly proteins of the 50S ribosomal subunit, although it is not seen to bind rRNA by itself. It is important during the early stages of 50S assembly. In Clostridium acetobutylicum (strain ATCC 824 / DSM 792 / JCM 1419 / IAM 19013 / LMG 5710 / NBRC 13948 / NRRL B-527 / VKM B-1787 / 2291 / W), this protein is Large ribosomal subunit protein uL13.